The sequence spans 784 residues: Ribosome biogenesis protein BOP1 homolog (784 aa).

Residues 1-11 show a composition bias toward basic residues; that stretch reads MTKKLALKRKG. The segment at 1 to 159 is disordered; that stretch reads MTKKLALKRK…DSDTSDEEDI (159 aa). 4 stretches are compositionally biased toward acidic residues: residues 27-36, 45-54, 62-73, and 84-111; these read SENEEEEEDL, EDSTDDEGID, SEELQFESDEEG, and AEED…EDEE. Residues 112–123 show a composition bias toward basic and acidic residues; that stretch reads KDSKLKQSDDKP. A compositionally biased stretch (low complexity) spans 124–133; it reads SSSGAASKKA. Residues 138–148 are compositionally biased toward basic and acidic residues; that stretch reads LSKRDTSKPEY. Over residues 149 to 158 the composition is skewed to acidic residues; the sequence is QDSDTSDEED. WD repeat units follow at residues 445 to 486, 488 to 526, 570 to 612, 615 to 653, 656 to 695, 699 to 738, and 754 to 784; these read GHTD…RTIE, DEVV…KVLV, THFK…SQIP, KSKG…LVKK, TNSK…KPYQ, LHRN…DLLQ, and RDEF…RLYT.

It belongs to the WD repeat BOP1/ERB1 family.

It is found in the nucleus. The protein localises to the nucleolus. The protein resides in the nucleoplasm. Its function is as follows. Required for maturation of ribosomal RNAs and formation of the large ribosomal subunit. The chain is Ribosome biogenesis protein BOP1 homolog from Drosophila erecta (Fruit fly).